The primary structure comprises 244 residues: Phosphoadenosine 5'-phosphosulfate reductase (244 aa).

The active-site Nucleophile; cysteine thiosulfonate intermediate is C239.

The protein belongs to the PAPS reductase family. CysH subfamily.

It localises to the cytoplasm. It carries out the reaction [thioredoxin]-disulfide + sulfite + adenosine 3',5'-bisphosphate + 2 H(+) = [thioredoxin]-dithiol + 3'-phosphoadenylyl sulfate. It functions in the pathway sulfur metabolism; hydrogen sulfide biosynthesis; sulfite from sulfate: step 3/3. Functionally, catalyzes the formation of sulfite from phosphoadenosine 5'-phosphosulfate (PAPS) using thioredoxin as an electron donor. The sequence is that of Phosphoadenosine 5'-phosphosulfate reductase from Salmonella paratyphi A (strain AKU_12601).